The chain runs to 373 residues: Dynein regulatory complex protein 9 (373 aa).

The stretch at 145–200 (EQAMKETIEREKNTTAAVRQLRNDLREEKLDHEEKMKEKKKGLSTLKEQLKALKMD) forms a coiled coil. An IQ domain is found at 336–365 (RAQAAVIIQAWWRGHKVRMVMSGGGKKGAK).

It belongs to the DRC9 family. Component of the nexin-dynein regulatory complex (N-DRC).

It is found in the cytoplasm. Its subcellular location is the cytoskeleton. The protein localises to the flagellum axoneme. In terms of biological role, component of the nexin-dynein regulatory complex (N-DRC), a key regulator of ciliary/flagellar motility which maintains the alignment and integrity of the distal axoneme and regulates microtubule sliding in motile axonemes. The polypeptide is Dynein regulatory complex protein 9 (Chlamydomonas reinhardtii (Chlamydomonas smithii)).